The following is a 214-amino-acid chain: MLISFEGIDGAGKSTQVMKLKRYLQERGREVLALREPGGTPVAEEIRELLLERRNDITPVGELLLFAASRAELVQQVIQPALENDSDVILDRFFDSTTAYQGYGRGLDLDMLAEINRIASCRLVPDVTFYLDLTPEDALMRKFSEKSLPLAFESEELDRMENSGLDFYRRVREGYHKIGGENPNRIIIIDALLSPSEIHRKIISSIDALCTKTA.

7 to 14 is a binding site for ATP; the sequence is GIDGAGKS.

The protein belongs to the thymidylate kinase family.

It carries out the reaction dTMP + ATP = dTDP + ADP. In terms of biological role, phosphorylation of dTMP to form dTDP in both de novo and salvage pathways of dTTP synthesis. The protein is Thymidylate kinase of Chlorobaculum tepidum (strain ATCC 49652 / DSM 12025 / NBRC 103806 / TLS) (Chlorobium tepidum).